The sequence spans 663 residues: Beta-galactosidase BgaH (663 aa).

Arg103 lines the substrate pocket. Residue Cys107 coordinates Zn(2+). Asn141 lines the substrate pocket. The active-site Proton donor is Glu142. The Zn(2+) site is built by Cys151, Cys153, and Cys156. Glu311 functions as the Nucleophile in the catalytic mechanism. Substrate-binding positions include Trp319 and 359–362 (EQYH).

It belongs to the glycosyl hydrolase 42 family. In terms of assembly, homodimer.

It catalyses the reaction Hydrolysis of terminal non-reducing beta-D-galactose residues in beta-D-galactosides.. Requires 4 M NaCl for maximal activity. Loss of activity if DTT or beta-mercaptoethanol is omitted from buffers. Addition of 5-20 mM EDTA, 1 mM Cu(2+) or 1 mM Zn(2+) results in loss of activity. In terms of biological role, when overexpressed, cleaves several different substrates including o-nitrophenyl-beta-D-galactopyranoside (ONPG), chromogen 5-bromo-4-chloro-3-indolyl-beta-D-galactopyranoside (X-Gal) and lactulose, but not lactose. Also has beta-D-fucosidase activity. No beta-L-fucosidase, beta-glucosidase, beta-arabinosidase or beta-xylosidase activity. This is Beta-galactosidase BgaH from Haloferax lucentense (strain DSM 14919 / JCM 9276 / NCIMB 13854 / Aa 2.2) (Haloferax alicantei).